The primary structure comprises 862 residues: MSTKDFNISRDEFRNITRCLDNEEFRNLFMEYCTELRDNRKQYEDELSMLEAQRGYDVKFLKPSPGYVIKTIVDGKGKGFINVCQSELVQKPTSTTGLNEDGTKGLKWSVPYAQTQPRKDYDNKRVECTVYDVMFHPDALHLASKNEGFRKLLNDTSLDAVEQSFKVRLDRANLRFPKLQYKGTPSSSVVREKLPHCDSLPKDELFDKLLPPLPNVPAPGKTGSERTTKTKNKENINRTAAVAAAAASPGNPFYTTPEYKIVQCRDVEYGEMTNELDAKIDVTIPRELKVVITLPLLKSTAECALDVTKTTLHLVSEKPARYKLELKLPYEVKESEGKATFNVEARSLTVTLPVLRKRNITLQDINSANVSASPAKEAGKLIEEIGTIIPPAGGDQQLARAASAPSAPEVPKKTIFPKFSVNKMENLLAFTLNVRNVDPSTIQLDNRTDSVHCRFSNVGNGYFPCFYVFFVRFPNALVTDVQHEEWDNNLIIQITLNTASVSSYQAGPDEHETVEYSIMEDIADKINKFGKEIEDDSLCIAVVRQATKASAKVKADALMSIEITKREEHGEPECDEKDGSEAEKARTLQKAKRNSRKKKKERSLSDSFCDHLKVIVENEASTEVAGEGATIQSSAKPIDSPEAKARKARSISECCPPKESDGGEEASTMPTLTRKYKSILKRSSYDRSISECSSVDDLGTSVEMARSIGEECRKTVRFNNSIRKQLFRSNSCILTMKKKALKRREVKRRADARRMSEGESTDNDEKDAHHHDDEHCSSSDQHDEKDAIEDDSGVSFDSESGDKEIAAAMKAEAIGGGGRGKAASKRKNSNKQGGAKSNGGKKQGTDAKNIQFKSDMIFDIEI.

Disordered regions lie at residues 208 to 229 (KLLP…RTTK), 564 to 602 (TKRE…KKER), 626 to 670 (GEGA…STMP), and 743 to 854 (RREV…QFKS). Residues 564-586 (TKREEHGEPECDEKDGSEAEKAR) show a composition bias toward basic and acidic residues. The span at 587 to 601 (TLQKAKRNSRKKKKE) shows a compositional bias: basic residues. Basic and acidic residues-rich tracts occupy residues 748–757 (RRADARRMSE) and 766–785 (KDAH…HDEK).

It belongs to the PIH1 family. Kintoun subfamily.

The protein localises to the cytoplasm. In terms of biological role, required for cytoplasmic pre-assembly of axonemal dyneins, thereby playing a central role in motility in cilia and flagella. Involved in pre-assembly of dynein arm complexes in the cytoplasm before intraflagellar transport loads them for the ciliary compartment. The protein is Protein kintoun of Anopheles gambiae (African malaria mosquito).